A 133-amino-acid polypeptide reads, in one-letter code: Transmembrane protein 60 (133 aa).

The next 4 helical transmembrane spans lie at 5 to 25, 35 to 55, 78 to 98, and 110 to 130; these read LAQRVLLTWLFTLLFLIMLVL, WFLIFIPVWIFDTILLVLLIV, AWYLIAMLLKLAFCLALCAKL, and FIPLWALLAGALTELGYNVFF.

The protein localises to the membrane. This chain is Transmembrane protein 60 (TMEM60), found in Homo sapiens (Human).